A 395-amino-acid chain; its full sequence is MAKQKFERTKPHVNVGTIGHVDHGKTTLTAAITSVLAGKGLATKRDYNQIDGAPEEKARGITINASHVEYETVNRHYAHVDCPGHADYVKNMITGAAQMDGAILVVSAADGPMPQTREHILLSRQVGVPKLVVFLNKADLVDDEELLDLVEMEVRELLSEYDFPGDDIPVIKGSALGALEGKPEWVAKVEELMDAVDAYIDTPLRATDKPFMMPVEDVFTITGRGTVATGRVDRGIVKVGDQVEIVGITDTKTTTVTGVEMFRKLLDQAEAGDNIGALLRGVDREGVERGQVLSKPGTVKPHAKFTAQIYVLSKEEGGRHTAFFSNYRPQFYFRTTDITGIITLGEGTEMVMPGDNAEVTVELIHPIALEEGTKFSIREGGRTVASGSVVKILAD.

The tr-type G domain occupies 10–204 (KPHVNVGTIG…AVDAYIDTPL (195 aa)). Positions 19–26 (GHVDHGKT) are G1. 19 to 26 (GHVDHGKT) is a binding site for GTP. Position 26 (Thr26) interacts with Mg(2+). The tract at residues 60-64 (GITIN) is G2. The G3 stretch occupies residues 81–84 (DCPG). GTP is bound by residues 81–85 (DCPGH) and 136–139 (NKAD). The segment at 136 to 139 (NKAD) is G4. Residues 174–176 (SAL) form a G5 region.

It belongs to the TRAFAC class translation factor GTPase superfamily. Classic translation factor GTPase family. EF-Tu/EF-1A subfamily. Monomer.

The protein resides in the cytoplasm. It carries out the reaction GTP + H2O = GDP + phosphate + H(+). GTP hydrolase that promotes the GTP-dependent binding of aminoacyl-tRNA to the A-site of ribosomes during protein biosynthesis. This is Elongation factor Tu from Acholeplasma laidlawii (strain PG-8A).